The primary structure comprises 403 residues: MDHLEFDENTDSEYSIFEEDNDYGLHGLDDSVGFTDLFDAPNIYRVYSWLHKHYNQKKGQLKHGVSRQKNKLQPIHKQINYETDKLKERLGKSIDKFQEQWNSGKVVRFRDKLSFALGVSTCILTALLVGMAPESMHLWYTIQLFVYLPLRYYTYQRKGYEYFIADFCYWGNILLLVYIWIFPESRRLFILSYSISYGTLAWSVVAWRNSLLFHSIDKITSLFIHFFPPLVLHTIVHLTNKSYLKDRFPAVLKVKKIDLLSSVEIASFFYALWQIWYYFFIQVGKQKQIQEGRPTSFTWLSKAYSKTKLGRAVAKLPQNLQPFVFMIIQYLYSITTMLPCSLWYNNKLYSTAFLALIFGWSVWNGASYYIDVFGRRFQKELEALRQQLAETPTNSGSSSALSR.

Residues 1-112 are Cytoplasmic-facing; it reads MDHLEFDENT…SGKVVRFRDK (112 aa). Residues 113–133 form a helical membrane-spanning segment; the sequence is LSFALGVSTCILTALLVGMAP. The Lumenal portion of the chain corresponds to 134–137; the sequence is ESMH. Residues 138–155 traverse the membrane as a helical segment; it reads LWYTIQLFVYLPLRYYTY. Residues 156–161 are Cytoplasmic-facing; the sequence is QRKGYE. A helical transmembrane segment spans residues 162-182; it reads YFIADFCYWGNILLLVYIWIF. Topologically, residues 183 to 186 are lumenal; the sequence is PESR. Residues 187–207 form a helical membrane-spanning segment; it reads RLFILSYSISYGTLAWSVVAW. At 208–218 the chain is on the cytoplasmic side; sequence RNSLLFHSIDK. The helical transmembrane segment at 219–239 threads the bilayer; sequence ITSLFIHFFPPLVLHTIVHLT. N-linked (GlcNAc...) asparagine glycosylation is present at Asn240. The Lumenal segment spans residues 240–262; it reads NKSYLKDRFPAVLKVKKIDLLSS. The helical transmembrane segment at 263–283 threads the bilayer; it reads VEIASFFYALWQIWYYFFIQV. Residues 284-322 are Cytoplasmic-facing; the sequence is GKQKQIQEGRPTSFTWLSKAYSKTKLGRAVAKLPQNLQP. The chain crosses the membrane as a helical span at residues 323 to 343; it reads FVFMIIQYLYSITTMLPCSLW. Residues 344-352 lie on the Lumenal side of the membrane; that stretch reads YNNKLYSTA. The chain crosses the membrane as a helical span at residues 353–373; sequence FLALIFGWSVWNGASYYIDVF. Residues 374–403 lie on the Cytoplasmic side of the membrane; the sequence is GRRFQKELEALRQQLAETPTNSGSSSALSR.

The protein belongs to the GPC1 family.

It localises to the endoplasmic reticulum membrane. Its subcellular location is the golgi apparatus membrane. It catalyses the reaction sn-glycerol 3-phosphocholine + an acyl-CoA = a 1-acyl-sn-glycero-3-phosphocholine + CoA. The catalysed reaction is sn-glycero-3-phosphoethanolamine + an acyl-CoA = a monoacyl-sn-glycero-3-phosphoethanolamine + CoA. It carries out the reaction sn-glycero-3-phosphoethanolamine + (9Z)-octadecenoyl-CoA = (9Z-octadecenoyl)-sn-glycero-3-phosphoethanolamine + CoA. Functionally, glycerophosphocholine acyltransferase (GPCAT) that utilizes acyl-CoA to acylate glycero-3-phosphocholine (GPC), forming lysophosphatidylcholine (LPC). Shows broad acyl specificities with a preference for 16:0-CoA, polyunsaturated acyl-CoA, and the hydroxylated ricinoleoyl-CoA. Also catalyzes the acylation of glycero-3-phosphoethanolamine (GPE) with acyl-CoA. In addition to acyl-CoA, GPCAT efficiently utilizes LPC and lysophosphatidylethanolamine (LPE) as acyl donors in the acylation of GPC. Contributes to the maintenance of phosphatidylcholine (PC) homeostasis and might also have specific functions in acyl editing of PC, such as transferring acyl groups modified at the sn-2 position of PC to the sn-1. The polypeptide is Glycerophosphocholine acyltransferase 1 (Schizosaccharomyces pombe (strain 972 / ATCC 24843) (Fission yeast)).